We begin with the raw amino-acid sequence, 297 residues long: Ribosome production factor 2 homolog (297 aa).

Residues Lys28 to Ala232 enclose the Brix domain.

The protein belongs to the RPF2 family.

The protein localises to the nucleus. The protein resides in the nucleolus. The sequence is that of Ribosome production factor 2 homolog from Caenorhabditis elegans.